The following is a 337-amino-acid chain: S-adenosylmethionine:tRNA ribosyltransferase-isomerase (337 aa).

Belongs to the QueA family. Monomer.

It is found in the cytoplasm. It catalyses the reaction 7-aminomethyl-7-carbaguanosine(34) in tRNA + S-adenosyl-L-methionine = epoxyqueuosine(34) in tRNA + adenine + L-methionine + 2 H(+). Its pathway is tRNA modification; tRNA-queuosine biosynthesis. In terms of biological role, transfers and isomerizes the ribose moiety from AdoMet to the 7-aminomethyl group of 7-deazaguanine (preQ1-tRNA) to give epoxyqueuosine (oQ-tRNA). The sequence is that of S-adenosylmethionine:tRNA ribosyltransferase-isomerase from Legionella pneumophila subsp. pneumophila (strain Philadelphia 1 / ATCC 33152 / DSM 7513).